Reading from the N-terminus, the 112-residue chain is Colipase (112 aa).

A signal peptide spans 1–17; sequence MKVLVVLLVTLVAVAYA. A propeptide spans 18–22 (enterostatin, activation peptide); that stretch reads APGPR. 5 cysteine pairs are disulfide-bonded: Cys-34-Cys-45, Cys-40-Cys-56, Cys-44-Cys-78, Cys-66-Cys-86, and Cys-80-Cys-104.

This sequence belongs to the colipase family. In terms of assembly, forms a 1:1 stoichiometric complex with pancreatic lipase. In terms of tissue distribution, expressed by the pancreas.

It is found in the secreted. Its function is as follows. Colipase is a cofactor of pancreatic lipase. It allows the lipase to anchor itself to the lipid-water interface. Without colipase the enzyme is washed off by bile salts, which have an inhibitory effect on the lipase. Functionally, enterostatin has a biological activity as a satiety signal. The sequence is that of Colipase from Rattus norvegicus (Rat).